Here is a 298-residue protein sequence, read N- to C-terminus: Dihydrodipicolinate reductase-like protein CRR1, chloroplastic (298 aa).

The transit peptide at 1-25 (MAAVNCHFFQLSRHLKPSRPSFSCS) directs the protein to the chloroplast. 160–163 (APTL) contacts NAD(+).

This sequence belongs to the DapB family. In terms of tissue distribution, expressed specifically in leaves.

The protein localises to the plastid. The protein resides in the chloroplast stroma. In terms of biological role, dihydrodipicolinate reductase (DHPR)-like protein that may not function as DHPR in lysine biosynthesis. Required for both formation and activity of the chloroplast NAD(P)H dehydrogenase (NDH) complex of the photosynthetic electron transport chain. May function in assembly or stabilization of the NDH complex. The polypeptide is Dihydrodipicolinate reductase-like protein CRR1, chloroplastic (Arabidopsis thaliana (Mouse-ear cress)).